A 66-amino-acid chain; its full sequence is Large ribosomal subunit protein bL28 (66 aa).

Residues 1–26 (MAKDAITGARTRFGNQRSHALNSSRR) form a disordered region. The segment covering 13-25 (FGNQRSHALNSSR) has biased composition (polar residues).

Belongs to the bacterial ribosomal protein bL28 family.

The polypeptide is Large ribosomal subunit protein bL28 (Leuconostoc citreum (strain KM20)).